A 31-amino-acid polypeptide reads, in one-letter code: Kunitz-type serine protease inhibitor RsTIQ2 (31 aa).

Residues 1–31 (EAVDFDSQCVPTADPGKCKFYFPMWNVNVFT) enclose the BPTI/Kunitz inhibitor domain.

Serine protease inhibitor. Inhibits trypsin, elastase, plasmin and kallikrein. This Rhipicephalus sanguineus (Brown dog tick) protein is Kunitz-type serine protease inhibitor RsTIQ2.